The primary structure comprises 318 residues: uncharacterized protein (318 aa).

Residues 67–157 (LAFDELEKEK…SLKAIQTSQE (91 aa)) are a coiled coil. Residues 172-318 (ESTNKVEKNA…KGFFARLFNL (147 aa)) form a disordered region. 2 stretches are compositionally biased toward basic and acidic residues: residues 175–193 (NKVEKNAVTEDKADSKDSK) and 219–236 (KVDKEDQISATEAIEKAS). The segment covering 237–248 (VEQSKNENAAET) has biased composition (polar residues). Composition is skewed to basic and acidic residues over residues 249-274 (SNKEATVDADAQHDAEQQVAEAHAEA) and 300-310 (SEPKPQEEKKG).

This is an uncharacterized protein from Staphylococcus aureus (strain Mu50 / ATCC 700699).